Consider the following 237-residue polypeptide: Protein ULTRAPETALA 1 (237 aa).

The SAND domain maps to 18–116; sequence EELQEMSGVN…SKTVLLKYYN (99 aa). The CW-type zinc finger occupies 133-191; it reads VCHRDEFVGCNDCGKERRFRLRSRDECRLHHNAMGDPNWKCSDFPYDKITCEEEEERGS.

Interacts with HHO5. Associates with ATX1 for trimethylating 'Lys-4' on histone H3 (H3K4me3) at flower MADS box gene loci. Expressed at low levels in seedlings, roots, shoots, leaves, stems, inflorescences, pollen, flowers and siliques, with highest levels dividing tissues including inflorescence.

The protein localises to the cytoplasm. The protein resides in the nucleus. In terms of biological role, putative transcription factor that acts as a key negative regulator of cell accumulation in shoot and floral meristems. Negatively regulates the size of the WUSCHEL (WUS)-expressing organizing center in inflorescence meristems. May act by down-regulating expression of WUS. Acts as an antirepressor that counteracts EMF1 action through modulation of trimethylated 'Lys-4' on histone H3 (H3K4me3) marks on target gene loci (including genes involved in salt stress response and flower development). Collaboratively with RBL and CYP40/SQN, influences floral meristem (FM) determinacy in an AGAMOUS and SUPERMAN-dependent manner, thus contributing to the floral developmental homeostasis. This Arabidopsis thaliana (Mouse-ear cress) protein is Protein ULTRAPETALA 1.